Here is a 217-residue protein sequence, read N- to C-terminus: uncharacterized protein (217 aa).

Residues 59-76 (AQSTIQRTSSLPVPSSSN) show a composition bias toward polar residues. Disordered stretches follow at residues 59–105 (AQST…ETAN) and 124–217 (KKSL…HISK). Position 68 is a phosphoserine (S68). Position 92 is a phosphothreonine (T92). Residues 124–135 (KKSLERRVREEQ) show a composition bias toward basic and acidic residues. Residues 136–147 (EEKTDNEDDNDV) show a composition bias toward acidic residues. Over residues 148–157 (EISTQESLEN) the composition is skewed to polar residues. A compositionally biased stretch (acidic residues) spans 173–188 (LEDDIEGQEFSFDDQD). Residues 199–217 (WLSSQKQQGSPLTSDHISK) show a composition bias toward polar residues.

This is an uncharacterized protein from Schizosaccharomyces pombe (strain 972 / ATCC 24843) (Fission yeast).